The sequence spans 221 residues: DNA replication complex GINS protein SLD5 (221 aa).

Belongs to the GINS4/SLD5 family. Component of the GINS complex which is a heterotetramer of gins1/psf1, gins2/psf2, gins3/psf3 and gins4/sld5. Component of the CMG helicase complex, composed of the mcm2-7 complex, the GINS complex and cdc45.

The protein localises to the nucleus. The protein resides in the chromosome. Its subcellular location is the cytoplasm. Functionally, required for initiation of chromosomal DNA replication. Core component of CDC45-MCM-GINS (CMG) helicase, the molecular machine that unwinds template DNA during replication, and around which the replisome is built. The chain is DNA replication complex GINS protein SLD5 from Xenopus laevis (African clawed frog).